Consider the following 469-residue polypeptide: Argininosuccinate lyase (469 aa).

This sequence belongs to the lyase 1 family. Argininosuccinate lyase subfamily.

The protein localises to the cytoplasm. It catalyses the reaction 2-(N(omega)-L-arginino)succinate = fumarate + L-arginine. It functions in the pathway amino-acid biosynthesis; L-arginine biosynthesis; L-arginine from L-ornithine and carbamoyl phosphate: step 3/3. This is Argininosuccinate lyase from Burkholderia orbicola (strain MC0-3).